Reading from the N-terminus, the 130-residue chain is UPF0102 protein RSc3265 (130 aa).

This sequence belongs to the UPF0102 family.

This Ralstonia nicotianae (strain ATCC BAA-1114 / GMI1000) (Ralstonia solanacearum) protein is UPF0102 protein RSc3265.